Here is a 659-residue protein sequence, read N- to C-terminus: Biosynthetic arginine decarboxylase 2 (659 aa).

Position 119 is an N6-(pyridoxal phosphate)lysine (Lys119). 311–321 (LNVGGGLAVDY) provides a ligand contact to substrate.

This sequence belongs to the Orn/Lys/Arg decarboxylase class-II family. SpeA subfamily. The cofactor is Mg(2+). Pyridoxal 5'-phosphate is required as a cofactor.

It carries out the reaction L-arginine + H(+) = agmatine + CO2. Catalyzes the biosynthesis of agmatine from arginine. The sequence is that of Biosynthetic arginine decarboxylase 2 (speA2) from Synechocystis sp. (strain ATCC 27184 / PCC 6803 / Kazusa).